Reading from the N-terminus, the 132-residue chain is MSMSDPIADFLTRIRNANMAHHDSVEAPASKMKKDIAEILKQEGFIRDVEYVEDNKQGIIRVFLKYGQDGERVISGLKRISKPGLRSYVKADAVPKVLNGLGIAIISTSNGVVTDKVARAKKVGGEVVAYIW.

Belongs to the universal ribosomal protein uS8 family. As to quaternary structure, part of the 30S ribosomal subunit. Contacts proteins S5 and S12.

In terms of biological role, one of the primary rRNA binding proteins, it binds directly to 16S rRNA central domain where it helps coordinate assembly of the platform of the 30S subunit. This is Small ribosomal subunit protein uS8 from Limosilactobacillus fermentum (strain NBRC 3956 / LMG 18251) (Lactobacillus fermentum).